The sequence spans 113 residues: Ig heavy chain V-III region T957 (113 aa).

Positions 1-113 constitute an Ig-like domain; the sequence is EVKLEESGGG…YWGQGTLVTV (113 aa). An intrachain disulfide couples C22 to C98.

The protein is Ig heavy chain V-III region T957 of Mus musculus (Mouse).